Here is a 274-residue protein sequence, read N- to C-terminus: 2,3,4,5-tetrahydropyridine-2,6-dicarboxylate N-succinyltransferase (274 aa).

Residues R106 and D143 each coordinate substrate.

The protein belongs to the transferase hexapeptide repeat family. As to quaternary structure, homotrimer.

It localises to the cytoplasm. It carries out the reaction (S)-2,3,4,5-tetrahydrodipicolinate + succinyl-CoA + H2O = (S)-2-succinylamino-6-oxoheptanedioate + CoA. It functions in the pathway amino-acid biosynthesis; L-lysine biosynthesis via DAP pathway; LL-2,6-diaminopimelate from (S)-tetrahydrodipicolinate (succinylase route): step 1/3. The protein is 2,3,4,5-tetrahydropyridine-2,6-dicarboxylate N-succinyltransferase of Herminiimonas arsenicoxydans.